The chain runs to 149 residues: Ribonuclease pancreatic (149 aa).

The N-terminal stretch at 1 to 25 is a signal peptide; sequence MGLEKSFILFSLLVLVLGWVQPSLG. Residues K32 and R35 each contribute to the substrate site. The active-site Proton acceptor is the H37. 4 cysteine pairs are disulfide-bonded: C51–C109, C65–C120, C83–C135, and C90–C97. Substrate-binding positions include 66–70, K91, and R110; that span reads KPVNT. H144 (proton donor) is an active-site residue.

The protein belongs to the pancreatic ribonuclease family. As to quaternary structure, monomer. Interacts with and forms tight 1:1 complexes with RNH1. Dimerization of two such complexes may occur. Interaction with RNH1 inhibits this protein. Pancreas.

It localises to the secreted. The catalysed reaction is an [RNA] containing cytidine + H2O = an [RNA]-3'-cytidine-3'-phosphate + a 5'-hydroxy-ribonucleotide-3'-[RNA].. It catalyses the reaction an [RNA] containing uridine + H2O = an [RNA]-3'-uridine-3'-phosphate + a 5'-hydroxy-ribonucleotide-3'-[RNA].. Endonuclease that catalyzes the cleavage of RNA on the 3' side of pyrimidine nucleotides. Acts on single-stranded and double-stranded RNA. The chain is Ribonuclease pancreatic (RNASE1) from Leopoldamys edwardsi (Edwards's long-tailed giant rat).